A 95-amino-acid polypeptide reads, in one-letter code: Co-chaperonin GroES (95 aa).

A disordered region spans residues 20 to 45 (KTKGGLIIPDSAKEKPAEGEITSVGE).

Belongs to the GroES chaperonin family. In terms of assembly, heptamer of 7 subunits arranged in a ring. Interacts with the chaperonin GroEL.

It localises to the cytoplasm. Its function is as follows. Together with the chaperonin GroEL, plays an essential role in assisting protein folding. The GroEL-GroES system forms a nano-cage that allows encapsulation of the non-native substrate proteins and provides a physical environment optimized to promote and accelerate protein folding. GroES binds to the apical surface of the GroEL ring, thereby capping the opening of the GroEL channel. The protein is Co-chaperonin GroES of Paracoccus denitrificans.